The chain runs to 464 residues: Arginine biosynthesis bifunctional protein ArgJ, mitochondrial (464 aa).

The N-terminal 22 residues, 1–22, are a transit peptide targeting the mitochondrion; that stretch reads MAASFKALPQQLTLTRSFARCY. Substrate is bound by residues T193, K222, T233, E320, N459, and T464. T233 acts as the Nucleophile in catalysis.

The protein belongs to the ArgJ family. Heterodimer of an alpha and a beta chain. The alpha and beta chains are autoproteolytically processed from a single precursor protein within the mitochondrion.

The protein localises to the mitochondrion matrix. It catalyses the reaction N(2)-acetyl-L-ornithine + L-glutamate = N-acetyl-L-glutamate + L-ornithine. It carries out the reaction L-glutamate + acetyl-CoA = N-acetyl-L-glutamate + CoA + H(+). The protein operates within amino-acid biosynthesis; L-arginine biosynthesis; L-ornithine and N-acetyl-L-glutamate from L-glutamate and N(2)-acetyl-L-ornithine (cyclic): step 1/1. It participates in amino-acid biosynthesis; L-arginine biosynthesis; N(2)-acetyl-L-ornithine from L-glutamate: step 1/4. Functionally, catalyzes two activities which are involved in the cyclic version of arginine biosynthesis: the synthesis of acetylglutamate from glutamate and acetyl-CoA, and of ornithine by transacetylation between acetylornithine and glutamate. The sequence is that of Arginine biosynthesis bifunctional protein ArgJ, mitochondrial from Verticillium alfalfae (strain VaMs.102 / ATCC MYA-4576 / FGSC 10136) (Verticillium wilt of alfalfa).